The primary structure comprises 192 residues: Nucleoside triphosphate pyrophosphatase (192 aa).

Catalysis depends on D73, which acts as the Proton acceptor.

This sequence belongs to the Maf family. A divalent metal cation is required as a cofactor.

It is found in the cytoplasm. The enzyme catalyses a ribonucleoside 5'-triphosphate + H2O = a ribonucleoside 5'-phosphate + diphosphate + H(+). It catalyses the reaction a 2'-deoxyribonucleoside 5'-triphosphate + H2O = a 2'-deoxyribonucleoside 5'-phosphate + diphosphate + H(+). Nucleoside triphosphate pyrophosphatase. May have a dual role in cell division arrest and in preventing the incorporation of modified nucleotides into cellular nucleic acids. This Ehrlichia chaffeensis (strain ATCC CRL-10679 / Arkansas) protein is Nucleoside triphosphate pyrophosphatase.